Consider the following 430-residue polypeptide: F-box/kelch-repeat protein At4g33290 (430 aa).

Residues 1 to 44 enclose the F-box domain; sequence MITDLPKDLIEEILSRVSMTSMRVVRLTCKSWNTLSNSESFKKM. Kelch repeat units lie at residues 161 to 207, 312 to 363, and 383 to 430; these read LLRF…CVQG, VPFI…IIEE, and LVRI…RPTR.

This is F-box/kelch-repeat protein At4g33290 from Arabidopsis thaliana (Mouse-ear cress).